A 274-amino-acid chain; its full sequence is Tryptase beta-2 (274 aa).

The N-terminal stretch at Met1 to Ala19 is a signal peptide. Positions Ala20–Gly29 are cleaved as a propeptide — activation peptide. In terms of domain architecture, Peptidase S1 spans Ile30–Pro271. Cysteines 58 and 74 form a disulfide. His73 acts as the Charge relay system in catalysis. Tyr96 carries the phosphotyrosine modification. Asn104 is a glycosylation site (N-linked (GlcNAc...) asparagine). Catalysis depends on Asp120, which acts as the Charge relay system. N-linked (GlcNAc...) asparagine glycosylation occurs at Asn131. Intrachain disulfides connect Cys154–Cys229, Cys187–Cys210, and Cys219–Cys247. Ser223 (charge relay system) is an active-site residue.

Belongs to the peptidase S1 family. Tryptase subfamily. Homotetramer. The active tetramer is converted to inactive monomers at neutral and acidic pH in the absence of heparin. Low concentrations of inactive monomers become active monomers at pH 6.0 in the presence of heparin. When the concentration of active monomers is higher, they convert to active monomers and then to active tetramers. These monomers are active and functionally distinct from the tetrameric enzyme. In contrast to the hidden active sites in the tetrameric form, the active site of the monomeric form is accessible for macromolecular proteins and inhibitors, e.g. fibrinogen which is a substrate for the monomeric but not for the tetrameric form. The monomeric form forms a complex with SERPINB6.

Its subcellular location is the secreted. It catalyses the reaction Preferential cleavage: Arg-|-Xaa, Lys-|-Xaa, but with more restricted specificity than trypsin.. Tryptase is the major neutral protease present in mast cells and is secreted upon the coupled activation-degranulation response of this cell type. Plays a role in innate immunity. The sequence is that of Tryptase beta-2 (Tpsb2) from Rattus norvegicus (Rat).